Here is a 136-residue protein sequence, read N- to C-terminus: Group 1 truncated hemoglobin GlbN (136 aa).

Histidine 81 contributes to the heme binding site.

This sequence belongs to the truncated hemoglobin family. Group I subfamily. In terms of assembly, homodimer. Heme serves as cofactor.

Functionally, binds oxygen cooperatively with very high affinity (P(50) = 0.013 mmHg at 20 degrees Celsius) because of a fast combination (25 microM(-1)sec(-1)) and a slow dissociation (0.2 sec(-1)) rate. In Mycobacterium bovis (strain ATCC BAA-935 / AF2122/97), this protein is Group 1 truncated hemoglobin GlbN (glbN).